The following is a 213-amino-acid chain: MGVHKIQPKDHLKPQNLEGISNEQIEPHFEAHYKGYVAKYNEIQEKLADQNFADRSKANQNYSEYRELKVEETFNYMGVVLHELYFGMLAPGGKGEPSEALKKKIEEDLGGLDACTNELKAAAIAFRGWAILGLDIFSGRLVVNGLDAHNVYNLTGLIPLIVIDTYEHAYYVDYKNKRPPYIDAFFKNINWDVVNERFEKAMKAYEALKDFIK.

The Fe cation site is built by His-28, His-82, Asp-164, and His-168.

It belongs to the iron/manganese superoxide dismutase family. In terms of assembly, homotetramer. The cofactor is Fe cation.

It catalyses the reaction 2 superoxide + 2 H(+) = H2O2 + O2. Destroys superoxide anion radicals which are normally produced within the cells and which are toxic to biological systems. The chain is Superoxide dismutase [Fe] (sodB) from Aquifex aeolicus (strain VF5).